Here is a 273-residue protein sequence, read N- to C-terminus: Rhamnulose-1-phosphate aldolase (273 aa).

Glu117 is a catalytic residue. His140, His142, and His211 together coordinate Zn(2+).

Belongs to the aldolase class II family. RhaD subfamily. It depends on Zn(2+) as a cofactor.

It localises to the cytoplasm. The enzyme catalyses L-rhamnulose 1-phosphate = (S)-lactaldehyde + dihydroxyacetone phosphate. Its pathway is carbohydrate degradation; L-rhamnose degradation; glycerone phosphate from L-rhamnose: step 3/3. Functionally, catalyzes the reversible cleavage of L-rhamnulose-1-phosphate to dihydroxyacetone phosphate (DHAP) and L-lactaldehyde. This Listeria monocytogenes serovar 1/2a (strain ATCC BAA-679 / EGD-e) protein is Rhamnulose-1-phosphate aldolase.